A 449-amino-acid polypeptide reads, in one-letter code: 23S rRNA (uracil(1939)-C(5))-methyltransferase RlmD (449 aa).

In terms of domain architecture, TRAM spans 12 to 70 (SKQLSAKQSFSVHQLDHLGAGIAQHQGKVVFIPGALPNETVQAQLTEQKKNYARAKLIK). 4 residues coordinate [4Fe-4S] cluster: Cys83, Cys89, Cys92, and Cys170. The S-adenosyl-L-methionine site is built by Gln282, Phe311, Asn316, Glu332, Asp359, and Asp379. Cys405 (nucleophile) is an active-site residue.

It belongs to the class I-like SAM-binding methyltransferase superfamily. RNA M5U methyltransferase family. RlmD subfamily.

It catalyses the reaction uridine(1939) in 23S rRNA + S-adenosyl-L-methionine = 5-methyluridine(1939) in 23S rRNA + S-adenosyl-L-homocysteine + H(+). Catalyzes the formation of 5-methyl-uridine at position 1939 (m5U1939) in 23S rRNA. This Shewanella sp. (strain ANA-3) protein is 23S rRNA (uracil(1939)-C(5))-methyltransferase RlmD.